The primary structure comprises 692 residues: Elongation factor G (692 aa).

One can recognise a tr-type G domain in the interval 8–282 (ERTRNIGIMA…AIVYYLPSPV (275 aa)). GTP is bound by residues 17–24 (AHIDAGKT), 81–85 (DTPGH), and 135–138 (NKMD).

The protein belongs to the TRAFAC class translation factor GTPase superfamily. Classic translation factor GTPase family. EF-G/EF-2 subfamily.

The protein resides in the cytoplasm. Catalyzes the GTP-dependent ribosomal translocation step during translation elongation. During this step, the ribosome changes from the pre-translocational (PRE) to the post-translocational (POST) state as the newly formed A-site-bound peptidyl-tRNA and P-site-bound deacylated tRNA move to the P and E sites, respectively. Catalyzes the coordinated movement of the two tRNA molecules, the mRNA and conformational changes in the ribosome. This is Elongation factor G from Carboxydothermus hydrogenoformans (strain ATCC BAA-161 / DSM 6008 / Z-2901).